The primary structure comprises 180 residues: MPENKIRSTTILCVRKSGKVAIGGDGQVSMGNTVMKNTAKKIRRLYDGKILSGFAGSAADAFTLFELFEKKVQEFGGSLSRSAVELAREWRTDRMLRKLEALLIVADKEESFLISGTGDVISPDEGVIAIGSGGSYALAAAKALYDHTDLSAREIVESSMKIAANICIYTNDHITLEEIL.

Thr9 is an active-site residue. Residues Ala164, Cys167, and Thr170 each coordinate Na(+).

This sequence belongs to the peptidase T1B family. HslV subfamily. In terms of assembly, a double ring-shaped homohexamer of HslV is capped on each side by a ring-shaped HslU homohexamer. The assembly of the HslU/HslV complex is dependent on binding of ATP.

The protein resides in the cytoplasm. The catalysed reaction is ATP-dependent cleavage of peptide bonds with broad specificity.. With respect to regulation, allosterically activated by HslU binding. In terms of biological role, protease subunit of a proteasome-like degradation complex believed to be a general protein degrading machinery. The polypeptide is ATP-dependent protease subunit HslV (Leptospira borgpetersenii serovar Hardjo-bovis (strain JB197)).